The primary structure comprises 525 residues: MTKDAEVEEFLKRVEDLDGKINKPPIVKKKPQHLSTTPIENDDTLDGNLVYKSAFNYEKSFGSKKPVGVIGLDKEDDRKFLVSEEDYKLLQKIKMEQQQQHLSERHHRHIEPVRHIIPDRHSKPIFHNEPVIVREESEDEAPPLPSRNRASSENVVKSTTSAPPLLPRRRYKDDITAKKLDVVSDNVNSSNKIKEMSSISDKNKSKPPLPEKKTFLKSLEDNKLTTSNYKDQDKGPELKPTRNVDFLESVQLKSPPQSPSKMKTIEEKHFKLNSPKKDGFIVSVLSSEENSRSSLSEKPSNEGNYHLSGGLTTKAEKKKPVVPPKKDIKLKDIELEKVDKTGKGGDGKQIEPEFQKIVLNKRTPPPVSKRKPSIPEALLKAQNLSKNTENKKSVAQSKESIDMLPKLNKKGPPVPQRKVSMPEALKKLESMKNKNSTTENVQKDNGEESEISDSEPESINNKLESVLKRANTSGQIGSKHIGHLPPRAATTGDLLSKKEPHTTQSLSHPNKSRSRGPKRKLPTKI.

Disordered stretches follow at residues Ile-21 to Glu-40, Gln-98 to Met-262, Leu-285 to Lys-325, and Asp-339 to Ile-525. Basic and acidic residues predominate over residues Ile-110–Ser-122. The segment covering Asn-148 to Ala-162 has biased composition (polar residues). 3 stretches are compositionally biased toward basic and acidic residues: residues Tyr-171–Val-182, Asp-201–Lys-223, and Lys-230–Arg-242. A compositionally biased stretch (polar residues) spans Gln-251–Lys-261. Over residues Leu-285–Glu-297 the composition is skewed to low complexity. Composition is skewed to basic and acidic residues over residues Lys-314 to Lys-325 and Asp-339 to Phe-354. Polar residues predominate over residues Gln-382–Lys-398. Acidic residues predominate over residues Glu-447–Pro-456. Over residues Asn-510–Ile-525 the composition is skewed to basic residues.

The protein resides in the cell membrane. It localises to the cytoplasm. Its subcellular location is the cytoskeleton. The protein localises to the actin patch. In terms of biological role, cortical patch protein involved in endocytosis. The polypeptide is Protein BSP1 (BSP1) (Candida glabrata (strain ATCC 2001 / BCRC 20586 / JCM 3761 / NBRC 0622 / NRRL Y-65 / CBS 138) (Yeast)).